We begin with the raw amino-acid sequence, 577 residues long: Acyl-coenzyme A synthetase ACSM2A, mitochondrial (577 aa).

The N-terminal 46 residues, 1-46, are a transit peptide targeting the mitochondrion; the sequence is MHWLRKVQGLCTLWGTQMSSRTLYINSRQLVSLQWGHQEVPAKFNF. Q139 is a CoA binding site. ATP-binding positions include 221 to 229, 359 to 364, D446, and R461; these read TSGTSGLPK and ESYGQT. T364 is a substrate binding site. CoA is bound at residue 469–471; it reads SGY. Residue R472 participates in substrate binding. Residue R501 coordinates CoA. S513 bears the Phosphoserine mark. Residues K532 and 540–542 each bind CoA; that span reads YPR. Position 557 (K557) interacts with ATP.

The protein belongs to the ATP-dependent AMP-binding enzyme family. In terms of assembly, monomer. Mg(2+) serves as cofactor. It depends on Mn(2+) as a cofactor.

The protein resides in the mitochondrion. It carries out the reaction a medium-chain fatty acid + ATP + CoA = a medium-chain fatty acyl-CoA + AMP + diphosphate. The catalysed reaction is benzoate + ATP + CoA = benzoyl-CoA + AMP + diphosphate. It catalyses the reaction hexanoate + ATP + CoA = hexanoyl-CoA + AMP + diphosphate. The enzyme catalyses butanoate + ATP + CoA = butanoyl-CoA + AMP + diphosphate. It carries out the reaction octanoate + ATP + CoA = octanoyl-CoA + AMP + diphosphate. The catalysed reaction is decanoate + ATP + CoA = decanoyl-CoA + AMP + diphosphate. Its function is as follows. Catalyzes the activation of fatty acids by CoA to produce an acyl-CoA, the first step in fatty acid metabolism. Capable of activating medium-chain fatty acids (e.g. butyric (C4) to decanoic (C10) acids), and certain carboxylate-containing xenobiotics, e.g. benzoate. The polypeptide is Acyl-coenzyme A synthetase ACSM2A, mitochondrial (ACSM2A) (Homo sapiens (Human)).